The sequence spans 482 residues: Pre-glycoprotein polyprotein GP complex (482 aa).

The N-myristoyl glycine; by host moiety is linked to residue G2. The Extracellular portion of the chain corresponds to 2–17; that stretch reads GQFISFMQEIPIFLQE. Residues 18-32 form a helical membrane-spanning segment; sequence ALNIALVAVSLICIV. A topological domain (cytoplasmic) is located at residue K33. The helical transmembrane segment at 34–53 threads the bilayer; it reads GLVNLYRCGLFQLMVFLVLA. Extracellular segments follow at residues 54–58 and 59–421; these read GRSCS and EETF…TLVD. C57 contacts Zn(2+). N-linked (GlcNAc...) asparagine; by host glycosylation is found at N83 and N95. 5 disulfide bridges follow: C92–C224, C134–C162, C205–C211, C269–C282, and C353–C374. N164 and N176 each carry an N-linked (GlcNAc...) asparagine; by host glycan. N-linked (GlcNAc...) asparagine; by host glycosylation is found at N354, N362, N379, and N384. The chain crosses the membrane as a helical span at residues 422–442; it reads ICFWSTEFFISTLFLHLIGFP. Residues 443–482 lie on the Cytoplasmic side of the membrane; that stretch reads THEHIRGEGCPLPHRLNSMGGCRCGKYLPLKKPTIWHRRH. Residues H444, H446, C452, H456, C464, C466, and H482 each coordinate Zn(2+).

The protein belongs to the arenaviridae GPC protein family. As to quaternary structure, homotetramer; disulfide-linked. Homotetramer. GP2 homotetramers bind through ionic interactions with GP1 homotetramers to form the GP complex together with the stable signal peptide. The GP-C polyprotein interacts with the host protease MBTPS1/SKI-1 resulting in the polyprotein processing. Post-translationally, specific enzymatic cleavages in vivo yield mature proteins. GP-C polyprotein is cleaved in the endoplasmic reticulum by the host protease MBTPS1. Only cleaved glycoprotein is incorporated into virions. In terms of processing, the SSP remains stably associated with the GP complex following cleavage by signal peptidase and plays crucial roles in the trafficking of GP through the secretory pathway. Myristoylation is necessary for GP2-mediated fusion activity.

The protein resides in the virion membrane. It localises to the host endoplasmic reticulum membrane. It is found in the host Golgi apparatus membrane. The protein localises to the host cell membrane. In terms of biological role, class I viral fusion protein that directs fusion of viral and host endosomal membranes, leading to delivery of the nucleocapsid into the cytoplasm. Membrane fusion is mediated by irreversible conformational changes induced upon acidification in the endosome. Functionally, stable signal peptide (SSP): cleaved and functions as a signal peptide. In addition, it is also retained as the third component of the GP complex. The SSP is required for efficient glycoprotein expression, post-translational maturation cleavage of GP1 and GP2, glycoprotein transport to the cell surface plasma membrane, formation of infectious virus particles, and acid pH-dependent glycoprotein-mediated cell fusion. Interacts with the host receptor. In Artibeus (neotropical fruit bats), this protein is Pre-glycoprotein polyprotein GP complex.